Here is a 143-residue protein sequence, read N- to C-terminus: Large ribosomal subunit protein uL11 (143 aa).

Belongs to the universal ribosomal protein uL11 family. In terms of assembly, part of the ribosomal stalk of the 50S ribosomal subunit. Interacts with L10 and the large rRNA to form the base of the stalk. L10 forms an elongated spine to which L12 dimers bind in a sequential fashion forming a multimeric L10(L12)X complex. In terms of processing, one or more lysine residues are methylated.

Its function is as follows. Forms part of the ribosomal stalk which helps the ribosome interact with GTP-bound translation factors. The chain is Large ribosomal subunit protein uL11 from Rhizobium johnstonii (strain DSM 114642 / LMG 32736 / 3841) (Rhizobium leguminosarum bv. viciae).